We begin with the raw amino-acid sequence, 388 residues long: LL-diaminopimelate aminotransferase (388 aa).

Substrate is bound by residues tyrosine 13, glycine 38, lysine 102, tyrosine 126, and asparagine 176. Pyridoxal 5'-phosphate contacts are provided by residues 101–102 (SK), tyrosine 126, asparagine 176, tyrosine 207, and 235–237 (SLS). Residue lysine 238 is modified to N6-(pyridoxal phosphate)lysine. Position 246 (arginine 246) interacts with pyridoxal 5'-phosphate. Arginine 364 serves as a coordination point for substrate.

Belongs to the class-I pyridoxal-phosphate-dependent aminotransferase family. LL-diaminopimelate aminotransferase subfamily. As to quaternary structure, homodimer. The cofactor is pyridoxal 5'-phosphate.

The enzyme catalyses (2S,6S)-2,6-diaminopimelate + 2-oxoglutarate = (S)-2,3,4,5-tetrahydrodipicolinate + L-glutamate + H2O + H(+). The protein operates within amino-acid biosynthesis; L-lysine biosynthesis via DAP pathway; LL-2,6-diaminopimelate from (S)-tetrahydrodipicolinate (aminotransferase route): step 1/1. Its function is as follows. Involved in the synthesis of meso-diaminopimelate (m-DAP or DL-DAP), required for both lysine and peptidoglycan biosynthesis. Catalyzes the direct conversion of tetrahydrodipicolinate to LL-diaminopimelate. The polypeptide is LL-diaminopimelate aminotransferase (Dehalococcoides mccartyi (strain CBDB1)).